Here is a 462-residue protein sequence, read N- to C-terminus: MGKTLFDKLWNRHVIYGKEGEPQLLYVDLHLIHEVTSPQAFEGLRLENRPLRRPDKTFATMDHNVPTEDIFNIQDLVAKKQIEALQTNCAEFGVTLADMGSDRQGIVHMVGPETGLTQPGKVIVCGDSHTATHGAFGAIGFGIGSSEVEHVFATQTIWQQKPKSMGIEINGKLPKGVYAKDIILHLIATYGVAFGTGYAVEYYGETIRNMSMEERMTICNMAIEGGAKMGMMAPDETTFEYVRGREYAPTDMDKAISDWKTLQTDSDAEYDLHIKMDASILEPYVTWGTNPEMGVPFSKAFPEIKDMNYERAYEYMGLKPGQTAEQIELGYVFIGSCTNARLSDLEEAARIVKGNKVKNNIRALVVPGSRQVRNAAESIGLDKIFIEAGFEWREPGCSMCLGMNPDQVPDGVHCASTSNRNFEGRQGKGARTHLVSPAMAAAAAINGHFIDIRKVAVISGGN.

Positions 337, 397, and 400 each coordinate [4Fe-4S] cluster.

Belongs to the aconitase/IPM isomerase family. LeuC type 1 subfamily. As to quaternary structure, heterodimer of LeuC and LeuD. It depends on [4Fe-4S] cluster as a cofactor.

The enzyme catalyses (2R,3S)-3-isopropylmalate = (2S)-2-isopropylmalate. It participates in amino-acid biosynthesis; L-leucine biosynthesis; L-leucine from 3-methyl-2-oxobutanoate: step 2/4. Functionally, catalyzes the isomerization between 2-isopropylmalate and 3-isopropylmalate, via the formation of 2-isopropylmaleate. This is 3-isopropylmalate dehydratase large subunit from Listeria monocytogenes serovar 1/2a (strain ATCC BAA-679 / EGD-e).